We begin with the raw amino-acid sequence, 401 residues long: Aspartokinase (401 aa).

It belongs to the aspartokinase family.

The catalysed reaction is L-aspartate + ATP = 4-phospho-L-aspartate + ADP. It participates in amino-acid biosynthesis; L-lysine biosynthesis via DAP pathway; (S)-tetrahydrodipicolinate from L-aspartate: step 1/4. Its pathway is amino-acid biosynthesis; L-methionine biosynthesis via de novo pathway; L-homoserine from L-aspartate: step 1/3. The protein operates within amino-acid biosynthesis; L-threonine biosynthesis; L-threonine from L-aspartate: step 1/5. The sequence is that of Aspartokinase (lysC) from Rickettsia conorii (strain ATCC VR-613 / Malish 7).